Reading from the N-terminus, the 457-residue chain is Fibrinogen C domain-containing protein 1-B (457 aa).

Residues 1–21 (MGSDRWKNIRGTPQMEDSVQE) are disordered. The Cytoplasmic segment spans residues 1–33 (MGSDRWKNIRGTPQMEDSVQEKSQRKGCGYILC). Residues 34 to 54 (TVLLSVAVLLAVTVTGAVLFM) form a helical; Signal-anchor for type II membrane protein membrane-spanning segment. Residues 55–457 (NQYHAPSTEP…MKIRPQREEN (403 aa)) are Extracellular-facing. Residues 231–454 (CANGSKPRDC…FTEMKIRPQR (224 aa)) form the Fibrinogen C-terminal domain. N233 is a glycosylation site (N-linked (GlcNAc...) asparagine). C240 and C269 are joined by a disulfide. Residue N336 is glycosylated (N-linked (GlcNAc...) asparagine). The Ca(2+) site is built by D389 and D391. C397 and C410 are oxidised to a cystine.

As to quaternary structure, homotetramer; disulfide-linked.

Its subcellular location is the membrane. Its function is as follows. Acetyl group-binding receptor which shows a calcium-dependent binding to acetylated structures such as chitin, some N-acetylated carbohydrates, and amino acids. The chain is Fibrinogen C domain-containing protein 1-B (fibcd1-b) from Xenopus laevis (African clawed frog).